Here is a 920-residue protein sequence, read N- to C-terminus: Nitrate reductase [NADH] (920 aa).

The tract at residues 1–69 (MAASVENRQF…DTSDDEEDEA (69 aa)) is disordered. The span at 60 to 69 (DTSDDEEDEA) shows a compositional bias: acidic residues. Cys185 is a Mo-molybdopterin binding site. The Cytochrome b5 heme-binding domain occupies 534 to 609 (SLTFTMSEVK…LEEYRVGELI (76 aa)). Positions 569 and 592 each coordinate heme. The 113-residue stretch at 663–775 (REKIPCKLIS…KGPLGHIEYM (113 aa)) folds into the FAD-binding FR-type domain. FAD-binding positions include 715–718 (RAYT), 732–736 (LVKIY), Phe737, Phe744, 749–751 (LMS), and Thr802.

It belongs to the nitrate reductase family. Homodimer. It depends on FAD as a cofactor. Requires heme as cofactor. Mo-molybdopterin is required as a cofactor. In terms of tissue distribution, in cortical cells of roots grown at low nitrate concentrations, in vascular tissues of roots at high nitrate concentrations and in root apex under both conditions.

The catalysed reaction is nitrite + NAD(+) + H2O = nitrate + NADH + H(+). In terms of biological role, nitrate reductase is a key enzyme involved in the first step of nitrate assimilation in plants, fungi and bacteria. This chain is Nitrate reductase [NADH] (NIA), found in Cichorium intybus (Chicory).